The following is an 870-amino-acid chain: Patatin-like phospholipase domain-containing protein NCU11180 (870 aa).

Disordered regions lie at residues M1–A24 and K131–A158. Over residues K131–R141 the composition is skewed to basic and acidic residues. Over residues N142–K155 the composition is skewed to basic residues. A helical membrane pass occupies residues W183–T203. The interval E281–T320 is disordered. Residues S289–K308 show a composition bias toward polar residues. One can recognise a PNPLA domain in the interval L399–N590. The GXSXG signature appears at G430 to G434. S432 (nucleophile) is an active-site residue. D577 functions as the Proton acceptor in the catalytic mechanism. Disordered regions lie at residues R735–G786 and G804–T870. Over residues T818–G834 the composition is skewed to acidic residues.

This sequence belongs to the PLPL family.

The protein resides in the membrane. Functionally, probable lipid hydrolase. The protein is Patatin-like phospholipase domain-containing protein NCU11180 of Neurospora crassa (strain ATCC 24698 / 74-OR23-1A / CBS 708.71 / DSM 1257 / FGSC 987).